We begin with the raw amino-acid sequence, 168 residues long: G/U mismatch-specific DNA glycosylase (168 aa).

This sequence belongs to the uracil-DNA glycosylase (UDG) superfamily. TDG/mug family. Binds DNA as a monomer.

The protein localises to the cytoplasm. It catalyses the reaction Specifically hydrolyzes mismatched double-stranded DNA and polynucleotides, releasing free uracil.. Functionally, excises ethenocytosine and uracil, which can arise by alkylation or deamination of cytosine, respectively, from the corresponding mispairs with guanine in ds-DNA. It is capable of hydrolyzing the carbon-nitrogen bond between the sugar-phosphate backbone of the DNA and the mispaired base. The complementary strand guanine functions in substrate recognition. Required for DNA damage lesion repair in stationary-phase cells. This chain is G/U mismatch-specific DNA glycosylase, found in Escherichia coli O9:H4 (strain HS).